Reading from the N-terminus, the 414-residue chain is DNA polymerase IV (414 aa).

The 182-residue stretch at 8–189 folds into the UmuC domain; sequence IFHIDMNSFY…LPIEEMHGIG (182 aa). Residues aspartate 12 and aspartate 108 each coordinate Mg(2+). Glutamate 109 is an active-site residue. The interval 394-414 is disordered; sequence EESKTRGTSFNRDFFQDEKKR.

This sequence belongs to the DNA polymerase type-Y family. In terms of assembly, monomer. The cofactor is Mg(2+).

It is found in the cytoplasm. It carries out the reaction DNA(n) + a 2'-deoxyribonucleoside 5'-triphosphate = DNA(n+1) + diphosphate. Its function is as follows. Poorly processive, error-prone DNA polymerase involved in untargeted mutagenesis. Copies undamaged DNA at stalled replication forks, which arise in vivo from mismatched or misaligned primer ends. These misaligned primers can be extended by PolIV. Exhibits no 3'-5' exonuclease (proofreading) activity. May be involved in translesional synthesis, in conjunction with the beta clamp from PolIII. This is DNA polymerase IV from Bacillus velezensis (strain DSM 23117 / BGSC 10A6 / LMG 26770 / FZB42) (Bacillus amyloliquefaciens subsp. plantarum).